We begin with the raw amino-acid sequence, 861 residues long: DNA mismatch repair protein MutS (861 aa).

616-623 (GPNMGGKS) contacts ATP.

Belongs to the DNA mismatch repair MutS family.

Its function is as follows. This protein is involved in the repair of mismatches in DNA. It is possible that it carries out the mismatch recognition step. This protein has a weak ATPase activity. This Haemophilus influenzae (strain PittEE) protein is DNA mismatch repair protein MutS.